A 757-amino-acid chain; its full sequence is Zinc finger CCCH domain-containing protein 5 (757 aa).

Positions 1–127 (MEQANEKEEE…REEEERRWKD (127 aa)) are disordered. The segment covering 13–35 (HEEAAGEKESFEESKEKAAEMSR) has biased composition (basic and acidic residues). A compositionally biased stretch (basic residues) spans 36–50 (KEKRKAMKKLKRKQV). Residues 51-127 (RKEIAAKERE…REEEERRWKD (77 aa)) are compositionally biased toward basic and acidic residues. The segment at 240 to 268 (EQDKAHCPFHLKTGACRFGQRCSRVHFYP) adopts a C3H1-type 1 zinc-finger fold. Residues 295–372 (YTDEEAELCY…KQVNCEFVNI (78 aa)) enclose the RRM domain. A C3H1-type 2 zinc finger spans residues 374-404 (RWKVAICGEYMKSRLKTCSRGSACNFIHCFR). The disordered stretch occupies residues 441–757 (HESSGSLNDS…EEEIERWRPV (317 aa)). Residues 444 to 455 (SGSLNDSISDLS) are compositionally biased toward polar residues. A compositionally biased stretch (basic and acidic residues) spans 487 to 546 (YHGDTQDSTREDKLRRHAENCHDGDDSPSRDGSLEREMYKERRYAKDTLHRDSRWSEHSP). 2 stretches are compositionally biased toward basic residues: residues 547 to 557 (GHRVGRKRIHG) and 600 to 609 (KTHRSSRKHS). 3 stretches are compositionally biased toward basic and acidic residues: residues 610–634 (REGS…DKSH), 644–672 (RSSS…KRSV), and 681–721 (SDKD…ETHK). The segment covering 722 to 733 (ERRHRHRKRRRT) has biased composition (basic residues).

This Arabidopsis thaliana (Mouse-ear cress) protein is Zinc finger CCCH domain-containing protein 5.